The sequence spans 119 residues: Immunoglobulin heavy variable 2-70 (119 aa).

Residues 1 to 19 (MDILCSTLLLLTVPSWVLS) form the signal peptide. Gln-20 is modified (pyrrolidone carboxylic acid). A framework-1 region spans residues 20-44 (QVTLRESGPALVKPTQTLTLTCTFS). The 100-residue stretch at 20–119 (QVTLRESGPA…DTATYYCARI (100 aa)) folds into the Ig-like domain. Cys-41 and Cys-116 are joined by a disulfide. The segment at 45 to 54 (GFSLSTSGMC) is complementarity-determining-1. Positions 55 to 71 (VSWIRQPPGKALEWLAL) are framework-2. The segment at 72–78 (IDWDDDK) is complementarity-determining-2. Positions 79-116 (YYSTSLKTRLTISKDTSKNQVVLTMTNMDPVDTATYYC) are framework-3. Residues 117–119 (ARI) are complementarity-determining-3.

As to quaternary structure, immunoglobulins are composed of two identical heavy chains and two identical light chains; disulfide-linked.

The protein resides in the secreted. Its subcellular location is the cell membrane. Its function is as follows. V region of the variable domain of immunoglobulin heavy chains that participates in the antigen recognition. Immunoglobulins, also known as antibodies, are membrane-bound or secreted glycoproteins produced by B lymphocytes. In the recognition phase of humoral immunity, the membrane-bound immunoglobulins serve as receptors which, upon binding of a specific antigen, trigger the clonal expansion and differentiation of B lymphocytes into immunoglobulins-secreting plasma cells. Secreted immunoglobulins mediate the effector phase of humoral immunity, which results in the elimination of bound antigens. The antigen binding site is formed by the variable domain of one heavy chain, together with that of its associated light chain. Thus, each immunoglobulin has two antigen binding sites with remarkable affinity for a particular antigen. The variable domains are assembled by a process called V-(D)-J rearrangement and can then be subjected to somatic hypermutations which, after exposure to antigen and selection, allow affinity maturation for a particular antigen. The sequence is that of Immunoglobulin heavy variable 2-70 from Homo sapiens (Human).